Reading from the N-terminus, the 95-residue chain is Small ribosomal subunit protein bS6 (95 aa).

The protein belongs to the bacterial ribosomal protein bS6 family.

In terms of biological role, binds together with bS18 to 16S ribosomal RNA. This chain is Small ribosomal subunit protein bS6, found in Aster yellows witches'-broom phytoplasma (strain AYWB).